A 193-amino-acid polypeptide reads, in one-letter code: Mediator of RNA polymerase II transcription subunit 11 (193 aa).

Residues 31–68 adopt a coiled-coil conformation; sequence AREIMQDLGKEKQISKNKMDDNANSFKKLITQVENELS. Positions 115 to 193 are disordered; the sequence is IEPPTQEVDE…EEEEGEQMEN (79 aa). Residues 121–143 show a composition bias toward acidic residues; it reads EVDEDNEDEEDSGDADMLEETPE. The span at 150 to 175 shows a compositional bias: low complexity; it reads TTSSSATTSDGGSGGADDAASSSAPR. The span at 184-193 shows a compositional bias: acidic residues; the sequence is EEEEGEQMEN.

It belongs to the Mediator complex subunit 11 family. In terms of assembly, component of the Mediator complex.

It is found in the nucleus. Functionally, component of the Mediator complex, a coactivator involved in the regulated transcription of nearly all RNA polymerase II-dependent genes. Mediator functions as a bridge to convey information from gene-specific regulatory proteins to the basal RNA polymerase II transcription machinery. Mediator is recruited to promoters by direct interactions with regulatory proteins and serves as a scaffold for the assembly of a functional pre-initiation complex with RNA polymerase II and the general transcription factors. The polypeptide is Mediator of RNA polymerase II transcription subunit 11 (mdt-11) (Caenorhabditis briggsae).